A 100-amino-acid polypeptide reads, in one-letter code: Putative pterin-4-alpha-carbinolamine dehydratase (100 aa).

This sequence belongs to the pterin-4-alpha-carbinolamine dehydratase family.

The enzyme catalyses (4aS,6R)-4a-hydroxy-L-erythro-5,6,7,8-tetrahydrobiopterin = (6R)-L-erythro-6,7-dihydrobiopterin + H2O. The sequence is that of Putative pterin-4-alpha-carbinolamine dehydratase from Afipia carboxidovorans (strain ATCC 49405 / DSM 1227 / KCTC 32145 / OM5) (Oligotropha carboxidovorans).